A 258-amino-acid polypeptide reads, in one-letter code: Ciliogenesis and planar polarity effector 2 (258 aa).

The interval 50 to 258 (SIDTASYKIF…LPNPPESAPE (209 aa)) is small GTPase-like. Residues serine 64, glycine 65, glycine 67, lysine 68, threonine 69, alanine 70, valine 82, histidine 84, threonine 87, lysine 176, aspartate 178, and serine 206 each coordinate GTP.

The protein belongs to the small GTPase superfamily. Rab family. In terms of assembly, interacts with FUZ. Associates with the CPLANE (ciliogenesis and planar polarity effectors) complex via its interaction with FUZ.

It is found in the cytoplasm. Its subcellular location is the cytoskeleton. The protein localises to the cilium basal body. The protein resides in the microtubule organizing center. It localises to the centrosome. It is found in the centriole. Functionally, required for efficient primary cilia initiation, regulating a late step in cilia initiation. Plays a role in the final maturation of the mother centriole and ciliary vesicle that allows extension of the ciliary axoneme. The protein is Ciliogenesis and planar polarity effector 2 of Homo sapiens (Human).